A 462-amino-acid chain; its full sequence is Protein phosphatase 1M (462 aa).

The span at M1–F10 shows a compositional bias: basic residues. Residues M1 to T66 form a disordered region. Residues E100–L452 enclose the PPM-type phosphatase domain. Positions 127 and 128 each coordinate Mn(2+).

The protein belongs to the PP2C family. Mg(2+) is required as a cofactor. Requires Mn(2+) as cofactor. Widely expressed with highest levels in testis and lower levels in lung, kidney and brain.

The protein resides in the nucleus. It carries out the reaction O-phospho-L-seryl-[protein] + H2O = L-seryl-[protein] + phosphate. The catalysed reaction is O-phospho-L-threonyl-[protein] + H2O = L-threonyl-[protein] + phosphate. The polypeptide is Protein phosphatase 1M (Mus musculus (Mouse)).